The chain runs to 554 residues: CTP synthase (554 aa).

An amidoligase domain region spans residues methionine 1–leucine 265. Serine 13 is a binding site for CTP. A UTP-binding site is contributed by serine 13. ATP-binding positions include serine 14–isoleucine 19 and aspartate 71. Mg(2+) contacts are provided by aspartate 71 and glutamate 139. CTP contacts are provided by residues aspartate 146–glutamate 148, lysine 186–glutamine 191, and lysine 222. UTP-binding positions include lysine 186–glutamine 191 and lysine 222. The Glutamine amidotransferase type-1 domain maps to asparagine 292–glycine 545. Glycine 353 is an L-glutamine binding site. The Nucleophile; for glutamine hydrolysis role is filled by cysteine 380. Residues tyrosine 381–glutamine 384, glutamate 404, and arginine 471 contribute to the L-glutamine site. Residues histidine 518 and glutamate 520 contribute to the active site.

It belongs to the CTP synthase family. Homotetramer.

The enzyme catalyses UTP + L-glutamine + ATP + H2O = CTP + L-glutamate + ADP + phosphate + 2 H(+). The catalysed reaction is L-glutamine + H2O = L-glutamate + NH4(+). It catalyses the reaction UTP + NH4(+) + ATP = CTP + ADP + phosphate + 2 H(+). Its pathway is pyrimidine metabolism; CTP biosynthesis via de novo pathway; CTP from UDP: step 2/2. Its activity is regulated as follows. Allosterically activated by GTP, when glutamine is the substrate; GTP has no effect on the reaction when ammonia is the substrate. The allosteric effector GTP functions by stabilizing the protein conformation that binds the tetrahedral intermediate(s) formed during glutamine hydrolysis. Inhibited by the product CTP, via allosteric rather than competitive inhibition. Catalyzes the ATP-dependent amination of UTP to CTP with either L-glutamine or ammonia as the source of nitrogen. Regulates intracellular CTP levels through interactions with the four ribonucleotide triphosphates. This is CTP synthase from Xanthomonas euvesicatoria pv. vesicatoria (strain 85-10) (Xanthomonas campestris pv. vesicatoria).